The chain runs to 400 residues: Probable transposase for insertion sequence element ISRM3-like (400 aa).

It belongs to the transposase mutator family.

Functionally, required for the transposition of the insertion element. The polypeptide is Probable transposase for insertion sequence element ISRM3-like (Sinorhizobium fredii (strain NBRC 101917 / NGR234)).